The primary structure comprises 216 residues: Thiamine-phosphate synthase (216 aa).

Residues 40 to 44 and asparagine 72 each bind 4-amino-2-methyl-5-(diphosphooxymethyl)pyrimidine; that span reads QLRIK. Residues aspartate 73 and aspartate 92 each contribute to the Mg(2+) site. Serine 111 provides a ligand contact to 4-amino-2-methyl-5-(diphosphooxymethyl)pyrimidine. 137 to 139 contributes to the 2-[(2R,5Z)-2-carboxy-4-methylthiazol-5(2H)-ylidene]ethyl phosphate binding site; sequence TTT. Lysine 140 provides a ligand contact to 4-amino-2-methyl-5-(diphosphooxymethyl)pyrimidine. 2-[(2R,5Z)-2-carboxy-4-methylthiazol-5(2H)-ylidene]ethyl phosphate is bound by residues glycine 169 and 189–190; that span reads VS.

It belongs to the thiamine-phosphate synthase family. Requires Mg(2+) as cofactor.

It carries out the reaction 2-[(2R,5Z)-2-carboxy-4-methylthiazol-5(2H)-ylidene]ethyl phosphate + 4-amino-2-methyl-5-(diphosphooxymethyl)pyrimidine + 2 H(+) = thiamine phosphate + CO2 + diphosphate. The catalysed reaction is 2-(2-carboxy-4-methylthiazol-5-yl)ethyl phosphate + 4-amino-2-methyl-5-(diphosphooxymethyl)pyrimidine + 2 H(+) = thiamine phosphate + CO2 + diphosphate. The enzyme catalyses 4-methyl-5-(2-phosphooxyethyl)-thiazole + 4-amino-2-methyl-5-(diphosphooxymethyl)pyrimidine + H(+) = thiamine phosphate + diphosphate. It functions in the pathway cofactor biosynthesis; thiamine diphosphate biosynthesis; thiamine phosphate from 4-amino-2-methyl-5-diphosphomethylpyrimidine and 4-methyl-5-(2-phosphoethyl)-thiazole: step 1/1. In terms of biological role, condenses 4-methyl-5-(beta-hydroxyethyl)thiazole monophosphate (THZ-P) and 2-methyl-4-amino-5-hydroxymethyl pyrimidine pyrophosphate (HMP-PP) to form thiamine monophosphate (TMP). The sequence is that of Thiamine-phosphate synthase from Photorhabdus laumondii subsp. laumondii (strain DSM 15139 / CIP 105565 / TT01) (Photorhabdus luminescens subsp. laumondii).